The following is a 176-amino-acid chain: dCTP deaminase (176 aa).

Residues 99–104 and Asp-115 each bind dCTP; that span reads RSTLAR. Glu-125 acts as the Proton donor/acceptor in catalysis. Gln-163 serves as a coordination point for dCTP.

This sequence belongs to the dCTP deaminase family. In terms of assembly, homotrimer.

The catalysed reaction is dCTP + H2O + H(+) = dUTP + NH4(+). Its pathway is pyrimidine metabolism; dUMP biosynthesis; dUMP from dCTP (dUTP route): step 1/2. Catalyzes the deamination of dCTP to dUTP. In Pyrobaculum neutrophilum (strain DSM 2338 / JCM 9278 / NBRC 100436 / V24Sta) (Thermoproteus neutrophilus), this protein is dCTP deaminase.